The following is a 305-amino-acid chain: PI protein (305 aa).

It belongs to the initiator RepB protein family. As to quaternary structure, homodimer.

Initiation for plasmid R6K DNA replication. The polypeptide is PI protein (pir) (Escherichia coli).